The primary structure comprises 345 residues: Arginase (345 aa).

Positions 1-16 (MKETAAAKFERQHMDS) are enriched in basic and acidic residues. The interval 1-34 (MKETAAAKFERQHMDSPDLGTDDDDKMSPATSPF) is disordered. Mn(2+) is bound by residues Ile101, His124, Ser126, Gly128, Ile232, and Cys234.

This sequence belongs to the arginase family. In terms of assembly, homotrimer. The cofactor is Mn(2+).

The catalysed reaction is L-arginine + H2O = urea + L-ornithine. It functions in the pathway nitrogen metabolism; urea cycle; L-ornithine and urea from L-arginine: step 1/1. The enzyme activity is increased in the range of 20-50% upon the addition of Mn(2+) (1 mM), Co(2+) (1 mM), Ni(2+) (1 and 5 mM) and K(+) (5 mM). In contrast, the addition of Cu(2+), Zn(2+), Ca(2+), Mg(2+), Fe(2+) (both 1 and 5 mM), and Co(2+) (5 mM) strongly suppresses the arginase activity. SDS (1%) and EDTA (1 mM) are the most potent inhibitors. Reducing agents DTT (1 mM), PMSF (1 mM) and beta-mercaptoethanol (1 mM) also significantly inhibit activity by 85%, 64% and 35%, respectively. Surfactants Triton X-100 (1%), Tween-80 (1%) and Tween-20 (1%) are more tolerant, showing a slight decrease of arginase activity in the range of 10-30%. Its function is as follows. Cold-active L-arginase that catalyzes the hydrolysis of L-arginine to L-ornithine and urea, an essential reaction in the urea cycle for toxic ammonia removal and cell proliferation. Is not able to use D-arginine or L-canavanine as substrates. This chain is Arginase, found in Glaciozyma antarctica (strain PI12) (Antarctic psychrophilic yeast).